A 387-amino-acid polypeptide reads, in one-letter code: Putative glutamate--cysteine ligase 2 (387 aa).

This sequence belongs to the glutamate--cysteine ligase type 2 family. YbdK subfamily.

It carries out the reaction L-cysteine + L-glutamate + ATP = gamma-L-glutamyl-L-cysteine + ADP + phosphate + H(+). Functionally, ATP-dependent carboxylate-amine ligase which exhibits weak glutamate--cysteine ligase activity. The sequence is that of Putative glutamate--cysteine ligase 2 from Trichormus variabilis (strain ATCC 29413 / PCC 7937) (Anabaena variabilis).